We begin with the raw amino-acid sequence, 306 residues long: Pantothenate kinase (306 aa).

Residue 91-98 (GSVAVGKS) coordinates ATP.

The protein belongs to the prokaryotic pantothenate kinase family.

It is found in the cytoplasm. It catalyses the reaction (R)-pantothenate + ATP = (R)-4'-phosphopantothenate + ADP + H(+). The protein operates within cofactor biosynthesis; coenzyme A biosynthesis; CoA from (R)-pantothenate: step 1/5. The protein is Pantothenate kinase (coaA) of Streptococcus pneumoniae serotype 4 (strain ATCC BAA-334 / TIGR4).